We begin with the raw amino-acid sequence, 112 residues long: UPF0102 protein C8J_0145 (112 aa).

Belongs to the UPF0102 family.

This Campylobacter jejuni subsp. jejuni serotype O:6 (strain 81116 / NCTC 11828) protein is UPF0102 protein C8J_0145.